Here is a 591-residue protein sequence, read N- to C-terminus: Thiol:disulfide interchange protein DsbD 1 (591 aa).

A signal peptide spans 1–18 (MRRLLTLILLLVALPAGA). At 19–175 (GLFDSRPGAS…GPLEHKGKRS (157 aa)) the chain is on the periplasmic side. 2 disulfide bridges follow: C134/C140 and C191/C313. The chain crosses the membrane as a helical span at residues 176–196 (LLFFFLAGLTLTFTPCVLPML). Over 197 to 213 (PILSGVVLRGRPGGGRG) the chain is Cytoplasmic. A helical membrane pass occupies residues 214 to 234 (FVLSLAYVLPMALCFALLGAL). At 235–251 (MGMFGASLNLQAQLQSP) the chain is on the periplasmic side. A helical transmembrane segment spans residues 252–272 (WVLVPFAAFFALFAVAMFGFF). The Cytoplasmic segment spans residues 273–295 (ELRLPGFIREPLDRLAGDARGGS). The chain crosses the membrane as a helical span at residues 296–316 (ILGAATLGVLSSLLVSPCVSA). Over 317–338 (PLAASLLYISASGDAWGGGLQL) the chain is Periplasmic. Residues 339 to 359 (FALGLGMGTPLVVFGAGGGAL) form a helical membrane-spanning segment. Over 360–365 (LPKSGA) the chain is Cytoplasmic. The helical transmembrane segment at 366–386 (WMNGVRNAFGVLLLAVAVWLL) threads the bilayer. Residues 387 to 392 (ERVVSG) lie on the Periplasmic side of the membrane. The helical transmembrane segment at 393 to 413 (PVALMLWGMLAGGAGLALGAL) threads the bilayer. The Cytoplasmic segment spans residues 414–423 (EFTPKSAARR). The helical transmembrane segment at 424-444 (LLQLLGLMFLTYAVAAWIGAL) threads the bilayer. The Periplasmic portion of the chain corresponds to 445–591 (QGESDPIHPL…ERLRRAATRQ (147 aa)). The 138-residue stretch at 452-589 (HPLGRSVPSI…LAERLRRAAT (138 aa)) folds into the Thioredoxin domain. C504 and C507 are joined by a disulfide.

This sequence belongs to the thioredoxin family. DsbD subfamily.

The protein resides in the cell inner membrane. The catalysed reaction is [protein]-dithiol + NAD(+) = [protein]-disulfide + NADH + H(+). It carries out the reaction [protein]-dithiol + NADP(+) = [protein]-disulfide + NADPH + H(+). Its function is as follows. Required to facilitate the formation of correct disulfide bonds in some periplasmic proteins and for the assembly of the periplasmic c-type cytochromes. Acts by transferring electrons from cytoplasmic thioredoxin to the periplasm. This transfer involves a cascade of disulfide bond formation and reduction steps. The chain is Thiol:disulfide interchange protein DsbD 1 from Pseudomonas aeruginosa (strain ATCC 15692 / DSM 22644 / CIP 104116 / JCM 14847 / LMG 12228 / 1C / PRS 101 / PAO1).